A 453-amino-acid polypeptide reads, in one-letter code: MVAIAILAAGKGTRMKSGLPKVLHSLGGRSLLGWVLNSAAEVEPERQIVIVGYRSEMVRESLQAVPGLEFVEQAEQLGTGHAVQQVIPLLQGYEDSLLVLNGDVPLLRPQTLKLLLDTHRRHNNAATLLTAHVPDPKGYGRVICDGNNILKQIIEDRDCTPAQKQNHRVNAGIYCFRWPDLAEVLPKLQANNNQQEYYLTDVVNDLSPVMAVDVEDYEEILGINDRKQLALAYQILQNRIKDQAMAAGVTLIDPDSITIDDTVKLEVDVVIEPQTHLRGHTTIGTGSRIGPGSLIENSQIGANVTISYSVVSDSVIQAGTRVGPYAHLRGHVEVGSQCRIGNFVELKNTKLGDRTNAAHLAYLGDTTTGTGVNIGAGTITANYDGVKKHRTQIGDRTKTGSNSVLVAPLILGNDVTVAAGSTITENVPDDCLAVARSRQVVKPGWRLKQPDPT.

The tract at residues 1-226 is pyrophosphorylase; the sequence is MVAIAILAAG…YEEILGINDR (226 aa). UDP-N-acetyl-alpha-D-glucosamine is bound by residues 7–10, K21, Q73, and 78–79; these read LAAG and GT. D103 is a binding site for Mg(2+). Residues G140, E155, N170, and N224 each coordinate UDP-N-acetyl-alpha-D-glucosamine. N224 provides a ligand contact to Mg(2+). Positions 227–247 are linker; sequence KQLALAYQILQNRIKDQAMAA. Residues 248–453 form an N-acetyltransferase region; the sequence is GVTLIDPDSI…GWRLKQPDPT (206 aa). UDP-N-acetyl-alpha-D-glucosamine-binding residues include R329 and K347. H359 (proton acceptor) is an active-site residue. Residues Y362 and N373 each coordinate UDP-N-acetyl-alpha-D-glucosamine. Residues A376, 382–383, S401, A419, and R436 each bind acetyl-CoA; that span reads NY.

It in the N-terminal section; belongs to the N-acetylglucosamine-1-phosphate uridyltransferase family. The protein in the C-terminal section; belongs to the transferase hexapeptide repeat family. In terms of assembly, homotrimer. Requires Mg(2+) as cofactor.

Its subcellular location is the cytoplasm. It catalyses the reaction alpha-D-glucosamine 1-phosphate + acetyl-CoA = N-acetyl-alpha-D-glucosamine 1-phosphate + CoA + H(+). The enzyme catalyses N-acetyl-alpha-D-glucosamine 1-phosphate + UTP + H(+) = UDP-N-acetyl-alpha-D-glucosamine + diphosphate. It participates in nucleotide-sugar biosynthesis; UDP-N-acetyl-alpha-D-glucosamine biosynthesis; N-acetyl-alpha-D-glucosamine 1-phosphate from alpha-D-glucosamine 6-phosphate (route II): step 2/2. The protein operates within nucleotide-sugar biosynthesis; UDP-N-acetyl-alpha-D-glucosamine biosynthesis; UDP-N-acetyl-alpha-D-glucosamine from N-acetyl-alpha-D-glucosamine 1-phosphate: step 1/1. It functions in the pathway bacterial outer membrane biogenesis; LPS lipid A biosynthesis. Catalyzes the last two sequential reactions in the de novo biosynthetic pathway for UDP-N-acetylglucosamine (UDP-GlcNAc). The C-terminal domain catalyzes the transfer of acetyl group from acetyl coenzyme A to glucosamine-1-phosphate (GlcN-1-P) to produce N-acetylglucosamine-1-phosphate (GlcNAc-1-P), which is converted into UDP-GlcNAc by the transfer of uridine 5-monophosphate (from uridine 5-triphosphate), a reaction catalyzed by the N-terminal domain. This is Bifunctional protein GlmU from Cyanothece sp. (strain PCC 7425 / ATCC 29141).